The following is a 148-amino-acid chain: Ribonuclease H (148 aa).

One can recognise an RNase H type-1 domain in the interval 3-144 (AEETVEIFTD…ADALANRGIE (142 aa)). The Mg(2+) site is built by Asp-12, Glu-50, Asp-72, and Asp-136. The interval 129 to 148 (HPENERADALANRGIEELKG) is disordered.

The protein belongs to the RNase H family. In terms of assembly, monomer. The cofactor is Mg(2+).

It localises to the cytoplasm. It carries out the reaction Endonucleolytic cleavage to 5'-phosphomonoester.. Functionally, endonuclease that specifically degrades the RNA of RNA-DNA hybrids. The protein is Ribonuclease H of Dechloromonas aromatica (strain RCB).